A 150-amino-acid polypeptide reads, in one-letter code: Large ribosomal subunit protein uL15 (150 aa).

A disordered region spans residues 1–58; that stretch reads MNLSGIKPPKGQVKTKKRIGRGMGSGHGKTATRGSKGQHAGTGFSQKRGFEGGQMPLH.

It belongs to the universal ribosomal protein uL15 family. Part of the 50S ribosomal subunit.

Binds to the 23S rRNA. The polypeptide is Large ribosomal subunit protein uL15 (Solibacter usitatus (strain Ellin6076)).